A 202-amino-acid chain; its full sequence is CASP-like protein 2B1 (202 aa).

Over Met1–Arg29 the chain is Cytoplasmic. Residues Leu30–Val50 traverse the membrane as a helical segment. Topologically, residues Gly51–Lys72 are extracellular. A helical transmembrane segment spans residues Ala73–Val93. At Arg94–Pro109 the chain is on the cytoplasmic side. A helical membrane pass occupies residues Leu110–Ala130. Residues Ala131 to Glu164 are Extracellular-facing. A helical transmembrane segment spans residues Gly165–Phe185. Over Ser186–Trp202 the chain is Cytoplasmic.

It belongs to the Casparian strip membrane proteins (CASP) family. In terms of assembly, homodimer and heterodimers.

It localises to the cell membrane. This chain is CASP-like protein 2B1, found in Ricinus communis (Castor bean).